Consider the following 310-residue polypeptide: Dicarboxylate carrier UCP2 (310 aa).

The Mitochondrial intermembrane segment spans residues 1-10 (MVGFRAGDVP). The helical transmembrane segment at 11–32 (PTATVKFIGAGTAACIADLFTF) threads the bilayer. Solcar repeat units follow at residues 11–107 (PTAT…VKQF), 115–204 (AGIG…IKDA), and 213–298 (DDLP…LKRA). Residues 33-78 (PLDTAKVRLQIQGENKASTNMGRGPVKYRGVFGTISTMVRVEGPRS) lie on the Mitochondrial matrix side of the membrane. Residues 79–101 (LYSGLVAGLQRQMSFASVRIGLY) form a helical membrane-spanning segment. The Mitochondrial intermembrane segment spans residues 102 to 120 (DSVKQFYTKGSDHAGIGSR). The chain crosses the membrane as a helical span at residues 121–137 (LMAGCTTGAMAVAVAQP). Topologically, residues 138 to 181 (TDVLKVRFQAQVSAGASKRYHSTMDAYRTIAKEEGFRGLWKGTG) are mitochondrial matrix. A helical membrane pass occupies residues 182-198 (PNITRNAIVNCTELVTY). Topologically, residues 199–215 (DLIKDALLKSSLMTDDL) are mitochondrial intermembrane. The chain crosses the membrane as a helical span at residues 216 to 235 (PCHFTSAFGAGFCTTIIASP). Over 236 to 269 (VDVVKTRYMNSAQGQYSSALNCAVAMLTKKGPKA) the chain is Mitochondrial matrix. A helical transmembrane segment spans residues 270–292 (FFKGFMPSFLRLGSWNVVMFVTY). The tract at residues 277–299 (SFLRLGSWNVVMFVTYEQLKRAM) is purine nucleotide binding. At 293–310 (EQLKRAMMAARQNWHTPL) the chain is on the mitochondrial intermembrane side.

The protein belongs to the mitochondrial carrier (TC 2.A.29) family. As to quaternary structure, homotetramer. Adopts an asymmetrical dimer of dimers functional form.

The protein localises to the mitochondrion inner membrane. It catalyses the reaction L-aspartate(out) + phosphate(in) + H(+)(in) = L-aspartate(in) + phosphate(out) + H(+)(out). It carries out the reaction oxaloacetate(out) + phosphate(in) + H(+)(in) = oxaloacetate(in) + phosphate(out) + H(+)(out). The catalysed reaction is (S)-malate(out) + phosphate(in) + H(+)(in) = (S)-malate(in) + phosphate(out) + H(+)(out). The enzyme catalyses malonate(out) + phosphate(in) + H(+)(in) = malonate(in) + phosphate(out) + H(+)(out). It catalyses the reaction sulfate(out) + phosphate(in) + H(+)(in) = sulfate(in) + phosphate(out) + H(+)(out). It carries out the reaction (S)-malate(out) = (S)-malate(in). The catalysed reaction is L-aspartate(out) = L-aspartate(in). The enzyme catalyses phosphate(in) = phosphate(out). It catalyses the reaction chloride(in) = chloride(out). It carries out the reaction H(+)(in) = H(+)(out). The catalysed reaction is a long-chain fatty acid(out) = a long-chain fatty acid(in). Its function is as follows. UCP are mitochondrial transporter proteins that create proton leaks across the inner mitochondrial membrane, thus uncoupling oxidative phosphorylation from ATP synthesis. As a result, energy is dissipated in the form of heat. Functionally, antiporter that exports dicarboxylate intermediates of the Krebs cycle in exchange for phosphate plus a proton across the inner membrane of mitochondria, a process driven by mitochondrial motive force with an overall impact on glycolysis, glutaminolysis and glutathione-dependent redox balance. Continuous export of oxaloacetate and related four-carbon dicarboxylates from mitochondrial matrix into the cytosol negatively regulates the oxidation of acetyl-CoA substrates via the Krebs cycle, lowering the ATP/ADP ratio and reactive oxygen species (ROS) production. May mediate inducible proton entry into the mitochondrial matrix affecting ATP turnover as a protection mechanism against oxidative stress. The proton currents are most likely associated with fatty acid flipping across the inner membrane of mitochondria in a metabolic process regulated by free fatty acids and purine nucleotides. The chain is Dicarboxylate carrier UCP2 (ucp2) from Danio rerio (Zebrafish).